We begin with the raw amino-acid sequence, 439 residues long: Homogentisate 1,2-dioxygenase (439 aa).

Fe cation-binding residues include H335, E341, and H371.

This sequence belongs to the homogentisate dioxygenase family. Fe cation is required as a cofactor.

The enzyme catalyses homogentisate + O2 = 4-maleylacetoacetate + H(+). Its pathway is amino-acid degradation; L-phenylalanine degradation; acetoacetate and fumarate from L-phenylalanine: step 4/6. The chain is Homogentisate 1,2-dioxygenase from Drosophila melanogaster (Fruit fly).